The sequence spans 119 residues: Large ribosomal subunit protein uL18 (119 aa).

Belongs to the universal ribosomal protein uL18 family. In terms of assembly, part of the 50S ribosomal subunit; part of the 5S rRNA/L5/L18/L25 subcomplex. Contacts the 5S and 23S rRNAs.

This is one of the proteins that bind and probably mediate the attachment of the 5S RNA into the large ribosomal subunit, where it forms part of the central protuberance. In Borreliella afzelii (strain PKo) (Borrelia afzelii), this protein is Large ribosomal subunit protein uL18.